We begin with the raw amino-acid sequence, 619 residues long: DBH-like monooxygenase protein 2 (619 aa).

Residues 1-21 (MACVLLFRLFLLLVLAAFSQG) form the signal peptide. Over 22-594 (KRLGPTSPLR…LSGSNTATLR (573 aa)) the chain is Extracellular. A DOMON domain is found at 40–156 (RAVFLRWDFD…DTMRVLAAYG (117 aa)). The active site involves Tyr-209. 2 cysteine pairs are disulfide-bonded: Cys-211–Cys-261 and Cys-248–Cys-271. 2 residues coordinate Cu cation: His-241 and His-242. N-linked (GlcNAc...) asparagine glycosylation occurs at Asn-250. Cu cation-binding residues include His-309, His-390, and His-392. Intrachain disulfides connect Cys-366/Cys-481 and Cys-444/Cys-466. The active site involves His-390. Asn-405 carries an N-linked (GlcNAc...) asparagine glycan. Cu cation is bound at residue Met-465. Asn-477 carries an N-linked (GlcNAc...) asparagine glycan. The chain crosses the membrane as a helical span at residues 595-615 (PLPMIAVLFLQGSLSCLLAML). At 616–619 (QTGV) the chain is on the cytoplasmic side.

It belongs to the copper type II ascorbate-dependent monooxygenase family. Cu(2+) serves as cofactor. Expressed at low levels in thymus and testis.

The protein localises to the membrane. This Mus musculus (Mouse) protein is DBH-like monooxygenase protein 2 (Moxd2).